Reading from the N-terminus, the 770-residue chain is 1,4-alpha-glucan branching enzyme GlgB (770 aa).

D437 acts as the Nucleophile in catalysis. The active-site Proton donor is E488.

It belongs to the glycosyl hydrolase 13 family. GlgB subfamily. In terms of assembly, monomer.

The catalysed reaction is Transfers a segment of a (1-&gt;4)-alpha-D-glucan chain to a primary hydroxy group in a similar glucan chain.. It functions in the pathway glycan biosynthesis; glycogen biosynthesis. In terms of biological role, catalyzes the formation of the alpha-1,6-glucosidic linkages in glycogen by scission of a 1,4-alpha-linked oligosaccharide from growing alpha-1,4-glucan chains and the subsequent attachment of the oligosaccharide to the alpha-1,6 position. The polypeptide is 1,4-alpha-glucan branching enzyme GlgB (Synechococcus sp. (strain JA-3-3Ab) (Cyanobacteria bacterium Yellowstone A-Prime)).